Consider the following 795-residue polypeptide: Protocadherin beta-4 (795 aa).

The N-terminal stretch at 1-27 (MKKLGRIHPNRQVLAFILMVFLSQVRL) is a signal peptide. At 28-689 (EPIRYSVLEE…SQADSLTVYL (662 aa)) the chain is on the extracellular side. Cadherin domains follow at residues 34-132 (VLEE…SPVF), 137-241 (VLLK…APEF), 246-346 (YGVQ…PPEL), 351-450 (LTSS…APAF), and 455-560 (YTLF…SPFV). N-linked (GlcNAc...) asparagine glycosylation occurs at N183. The N-linked (GlcNAc...) asparagine glycan is linked to N417. N566 carries N-linked (GlcNAc...) asparagine glycosylation. A Cadherin 6 domain is found at 567 to 670 (GSAPCTELVP…LVDGFSQPYL (104 aa)). A helical transmembrane segment spans residues 690 to 710 (VVALASVSSLFLFSVLLFVAV). Residues 711–795 (RLCRRSRAAS…PKFRNSLVFS (85 aa)) are Cytoplasmic-facing.

Its subcellular location is the cell membrane. Its function is as follows. Potential calcium-dependent cell-adhesion protein. May be involved in the establishment and maintenance of specific neuronal connections in the brain. This is Protocadherin beta-4 (PCDHB4) from Pan troglodytes (Chimpanzee).